Here is a 1005-residue protein sequence, read N- to C-terminus: Negative regulator of pleiotropic drug resistance STB5 (1005 aa).

The segment at methionine 1–glutamate 28 is disordered. The zn(2)-C6 fungal-type DNA-binding region spans cysteine 32–cysteine 59. Disordered stretches follow at residues glycine 129 to arginine 151, lysine 666 to lysine 693, and threonine 763 to arginine 831. Over residues lysine 673–lysine 693 the composition is skewed to basic and acidic residues. The span at threonine 763–glutamine 773 shows a compositional bias: polar residues. Positions glutamate 792–asparagine 801 are enriched in basic and acidic residues.

It is found in the nucleus. Functionally, transcription factor that negatively regulates pleiotropic drug resistance genes, including the ABC transporter genes CDR1, PDH1, and YOR1. This chain is Negative regulator of pleiotropic drug resistance STB5, found in Candida glabrata (strain ATCC 2001 / BCRC 20586 / JCM 3761 / NBRC 0622 / NRRL Y-65 / CBS 138) (Yeast).